Consider the following 313-residue polypeptide: Ribosomal RNA small subunit methyltransferase H (313 aa).

Residues 35 to 37 (GGH), Asp-55, Phe-79, Asp-101, and Gln-108 each bind S-adenosyl-L-methionine.

Belongs to the methyltransferase superfamily. RsmH family.

It is found in the cytoplasm. It catalyses the reaction cytidine(1402) in 16S rRNA + S-adenosyl-L-methionine = N(4)-methylcytidine(1402) in 16S rRNA + S-adenosyl-L-homocysteine + H(+). In terms of biological role, specifically methylates the N4 position of cytidine in position 1402 (C1402) of 16S rRNA. This chain is Ribosomal RNA small subunit methyltransferase H, found in Salmonella agona (strain SL483).